The chain runs to 189 residues: Mediator of RNA polymerase II transcription subunit 21 (189 aa).

The tract at residues 50 to 102 (KIPKNSTAPPVPAGAPVPSQSSPPPPQTQRGASEAAADPNLPPAPDSPRTFAS) is disordered. A compositionally biased stretch (pro residues) spans 58-76 (PPVPAGAPVPSQSSPPPPQ). Residues 127–170 (GIDSSEAEQEKRIRELEAELRGVEEEREAKIRELRTLGRTLERV) are a coiled coil.

Belongs to the Mediator complex subunit 21 family. In terms of assembly, component of the Mediator complex.

The protein resides in the nucleus. In terms of biological role, component of the Mediator complex, a coactivator involved in the regulated transcription of nearly all RNA polymerase II-dependent genes. Mediator functions as a bridge to convey information from gene-specific regulatory proteins to the basal RNA polymerase II transcription machinery. Mediator is recruited to promoters by direct interactions with regulatory proteins and serves as a scaffold for the assembly of a functional preinitiation complex with RNA polymerase II and the general transcription factors. The protein is Mediator of RNA polymerase II transcription subunit 21 (srb7) of Aspergillus clavatus (strain ATCC 1007 / CBS 513.65 / DSM 816 / NCTC 3887 / NRRL 1 / QM 1276 / 107).